A 414-amino-acid polypeptide reads, in one-letter code: Glycogen synthase (414 aa).

It belongs to the glycosyltransferase group 1 family.

The enzyme catalyses [(1-&gt;4)-alpha-D-glucosyl](n) + UDP-alpha-D-glucose = [(1-&gt;4)-alpha-D-glucosyl](n+1) + UDP + H(+). It participates in glycan biosynthesis; glycogen biosynthesis. In terms of biological role, glucosyltransferase that uses UDP-glucose as the sugar donor to elongate alpha-(1-&gt;4)-glucans. Is involved in the biosynthesis of both 6-O-methylglucosyl lipopolysaccharides (MGLP) and glycogen. May also use ADP-glucose as substrate. In Mycobacterium tuberculosis (strain CDC 1551 / Oshkosh), this protein is Glycogen synthase.